Here is a 228-residue protein sequence, read N- to C-terminus: Aquaporin Z (228 aa).

A run of 5 helical transmembrane segments spans residues 1 to 21 (MLNKLSAEFFGTFWLVFGGCG), 46 to 66 (TVLTMAYAVGGISGGHFNPAV), 82 to 102 (IPYWVAQVLGAIATAAILYVI), 129 to 149 (MMAGLLIEIILTAFFIIIILG), and 154 to 174 (LAPAGFAPIAIGFGLTLIHLV). The NPA 1 motif lies at 63–65 (NPA). The NPA 2 motif lies at 184–186 (NPA). The helical transmembrane segment at 205-225 (LFWVAPLVGAVIGAIIWKGLL) threads the bilayer.

It belongs to the MIP/aquaporin (TC 1.A.8) family. Homotetramer.

It localises to the cell inner membrane. The enzyme catalyses H2O(in) = H2O(out). Functionally, channel that permits osmotically driven movement of water in both directions. It is involved in the osmoregulation and in the maintenance of cell turgor during volume expansion in rapidly growing cells. It mediates rapid entry or exit of water in response to abrupt changes in osmolarity. This chain is Aquaporin Z, found in Brucella suis biovar 1 (strain 1330).